The chain runs to 491 residues: Proline--tRNA ligase (491 aa).

The protein belongs to the class-II aminoacyl-tRNA synthetase family. ProS type 3 subfamily. In terms of assembly, homodimer.

The protein resides in the cytoplasm. The enzyme catalyses tRNA(Pro) + L-proline + ATP = L-prolyl-tRNA(Pro) + AMP + diphosphate. In terms of biological role, catalyzes the attachment of proline to tRNA(Pro) in a two-step reaction: proline is first activated by ATP to form Pro-AMP and then transferred to the acceptor end of tRNA(Pro). This is Proline--tRNA ligase from Amoebophilus asiaticus (strain 5a2).